The sequence spans 315 residues: Neuroguidin (315 aa).

2 disordered regions span residues 127 to 201 and 289 to 315; these read SEND…KQKR and VQDI…RKRK. 2 stretches are compositionally biased toward basic and acidic residues: residues 159–168 and 182–200; these read KTKEQKEPSG and YDGD…EKQK. The stretch at 181–206 forms a coiled coil; the sequence is HYDGDLTEADRQKERVEKQKRAALRS. Over residues 296–315 the composition is skewed to basic residues; the sequence is KPKKKKIIKKGKKKVFRKRK.

It belongs to the SAS10 family. Part of the small subunit (SSU) processome, composed of more than 70 proteins and the RNA chaperone small nucleolar RNA (snoRNA) U3.

Its subcellular location is the nucleus. It localises to the nucleolus. The protein localises to the chromosome. It is found in the centromere. The protein resides in the cytoplasm. Its subcellular location is the cell projection. It localises to the axon. The protein localises to the dendrite. It is found in the filopodium. Part of the small subunit (SSU) processome, first precursor of the small eukaryotic ribosomal subunit. During the assembly of the SSU processome in the nucleolus, many ribosome biogenesis factors, an RNA chaperone and ribosomal proteins associate with the nascent pre-rRNA and work in concert to generate RNA folding, modifications, rearrangements and cleavage as well as targeted degradation of pre-ribosomal RNA by the RNA exosome. Its dissociation from the complex determines the transition from state pre-A1 to state pre-A1*. May inhibit mRNA translation. In Danio rerio (Zebrafish), this protein is Neuroguidin (ngdn).